A 509-amino-acid chain; its full sequence is Heat shock 70 kDa protein 14 (509 aa).

It belongs to the heat shock protein 70 family. In terms of assembly, component of ribosome-associated complex (RAC), a heterodimer composed of Hsp70/DnaK-type chaperone HSPA14 and Hsp40/DnaJ-type chaperone DNAJC2.

The protein localises to the cytoplasm. It is found in the cytosol. Functionally, component of the ribosome-associated complex (RAC), a complex involved in folding or maintaining nascent polypeptides in a folding-competent state. In the RAC complex, binds to the nascent polypeptide chain, while DNAJC2 stimulates its ATPase activity. The sequence is that of Heat shock 70 kDa protein 14 (HSPA14) from Bos taurus (Bovine).